Here is a 206-residue protein sequence, read N- to C-terminus: Probable GTP-binding protein EngB (206 aa).

The EngB-type G domain occupies 29–201 (ILPEVAVVGR…MIMIQDALND (173 aa)). Residues 37–44 (GRSNVGKS), 64–68 (GKTQA), 82–85 (DLPG), 149–152 (TKID), and 180–182 (YSV) contribute to the GTP site. Positions 44 and 66 each coordinate Mg(2+).

The protein belongs to the TRAFAC class TrmE-Era-EngA-EngB-Septin-like GTPase superfamily. EngB GTPase family. It depends on Mg(2+) as a cofactor.

In terms of biological role, necessary for normal cell division and for the maintenance of normal septation. In Protochlamydia amoebophila (strain UWE25), this protein is Probable GTP-binding protein EngB.